The sequence spans 1492 residues: Condensin-2 complex subunit D3-L (1492 aa).

Residues 152 to 201 (WPRDPNASRKRKKDTLKSSQGDNRGGRKRPRPPRRDEQEMEDLSEEEQDE) are disordered. The span at 189 to 201 (QEMEDLSEEEQDE) shows a compositional bias: acidic residues. HEAT repeat units lie at residues 543–581 (SSDG…CHLI), 583–619 (CSSE…AQPH), and 621–659 (VLIQ…QSIT). Disordered regions lie at residues 1269–1345 (QLER…PRPR), 1359–1406 (RKAA…SLVG), and 1454–1492 (IMSP…KPSN). The segment covering 1277 to 1290 (NVQNPPSAESTGSP) has biased composition (polar residues). Residues 1377–1388 (PSTPSPARTTSS) are compositionally biased toward low complexity.

In terms of assembly, component of the condensin-2 complex, which contains the smc2 and smc4 heterodimer, and three non SMC subunits, ncapg2, ncaph2 and ncapd3 that probably regulate the complex.

Its subcellular location is the nucleus. Regulatory subunit of the condensin-2 complex, a complex which establishes mitotic chromosome architecture and is involved in physical rigidity of the chromatid axis. In Xenopus laevis (African clawed frog), this protein is Condensin-2 complex subunit D3-L.